The primary structure comprises 425 residues: MIDIKILRENPEIMKENIILRNLDPQKYDVDYIIELDAKRRSLQKELDNLRAQRNKISQEIGKHQGEEREKLIKEAKILKEKIEELAKEYDNVEKELFSRLWQLPNFLSPKAPRGKDEKDNVEIKKWGEIKTFNFTPKDHLDLALLNDLVDFERGSKVTGSNFYYLKNEAVLLEFALFRLVIDTLLPEGFKLFITPDLARMEIIDGIGFQPRGPEAQIYRVEDTDLGLIATAEITLGGYHKDEILDELDLPLKYLGFSHCFRTEAGAYGRYNRGLYRVHQFSKAEIFIICRPEDSEEMHEYILGLEEKIFQKLEIPYRVLDICSGDLGAPAARKFDIEAWMPGRGEFGEVTSCSNCTDYQARRLNIRFRRVTGEVEYVHMLNGTAIAISRALIAIFENYQQEDGSILIPKALQPYIGISEIRPKK.

Residue 231-233 participates in L-serine binding; that stretch reads TAE. Residues 262-264 and Val-278 each bind ATP; that span reads RTE. An L-serine-binding site is contributed by Glu-285. 349–352 provides a ligand contact to ATP; it reads EVTS. An L-serine-binding site is contributed by Thr-384.

It belongs to the class-II aminoacyl-tRNA synthetase family. Type-1 seryl-tRNA synthetase subfamily. Homodimer. The tRNA molecule binds across the dimer.

It localises to the cytoplasm. The catalysed reaction is tRNA(Ser) + L-serine + ATP = L-seryl-tRNA(Ser) + AMP + diphosphate + H(+). It catalyses the reaction tRNA(Sec) + L-serine + ATP = L-seryl-tRNA(Sec) + AMP + diphosphate + H(+). Its pathway is aminoacyl-tRNA biosynthesis; selenocysteinyl-tRNA(Sec) biosynthesis; L-seryl-tRNA(Sec) from L-serine and tRNA(Sec): step 1/1. Functionally, catalyzes the attachment of serine to tRNA(Ser). Is also able to aminoacylate tRNA(Sec) with serine, to form the misacylated tRNA L-seryl-tRNA(Sec), which will be further converted into selenocysteinyl-tRNA(Sec). The chain is Serine--tRNA ligase from Dictyoglomus turgidum (strain DSM 6724 / Z-1310).